Reading from the N-terminus, the 835-residue chain is Peptide transporter family 1 (835 aa).

11 helical membrane-spanning segments follow: residues 86–106 (IFFN…SIVA), 113–133 (FWTI…LALA), 150–170 (GLLI…AFGG), 183–203 (LFFS…TFIS), 222–242 (FGIP…GSFW), 325–345 (MFLP…VWLI), 368–388 (LNAV…YPVA), 401–421 (VTGG…QLQV), 697–717 (ILWQ…FSIT), 738–758 (WLLT…LNLF), and 765–785 (FFVY…LSIF). Positions 814–835 (PRYSIDNKGFHPDEKDTFDMHF) are disordered. The segment covering 821–835 (KGFHPDEKDTFDMHF) has biased composition (basic and acidic residues).

It belongs to the major facilitator superfamily. Proton-dependent oligopeptide transporter (POT/PTR) (TC 2.A.17) family. In terms of tissue distribution, expressed specifically in the intestine.

The protein localises to the apical cell membrane. Functionally, low-affinity peptide transporter that is necessary for proton-dependent uptake of di- or tripeptides, and to a minor extent tetrapeptides, in the intestine. Transport is independent of sodium and chloride ions. Controls the uptake of dietary fatty acids, plays a role in fatty acid synthesis and is responsible for dipeptide-induced acidification of the intestine. Regulates cellular pH differences together with the antiporter protein, nhx-2. Amino acid uptake and absorption levels influence the insulin signaling/daf-2 and let-363/TOR pathways, subsequently affecting the stress response and longevity of the organism. It is required for the uptake of the L-enantiomers of various amino acids, including L-glutamate. In response to the availability of amino acid nutrients, may play a role in promoting reproduction and fertility. The sequence is that of Peptide transporter family 1 from Caenorhabditis elegans.